We begin with the raw amino-acid sequence, 384 residues long: MAAARVPLWAICVRRVALATVYFQEEFLDGERWRNRWVHSTNDSQFGHFRLSSGNFYGHKEKDKGLQTTQNSRFYAISARFKPFSNKGKTLIIQYTVKHEQKMDCGGGYIKLFPADVDQKNLNGKSQYYIMFGPDICGFDIKTVHVILHFKNQYHANKKSIRCKVDSFTHLYTLVLRPDLTYEVKIDGQSIESGSIEYDWQLTSLKKMEKASAEAEGWDQAAKDKSQDWEKHFLDASASKPSDWKGELDGDWQAAMLQKPPYQDGLKPEGIDKDVWLHQKMKNSYLTEYDLSEFENIGAVGLELWQVRSGTIFDNFLITDDEEYAENFGKATWGETKGPEKEMDAIQAKEEVKKAQEEDEDDMLMGRFRGRENSFKGFHRRNEF.

Positions 1 to 19 (MAAARVPLWAICVRRVALA) are cleaved as a signal peptide. The segment at 20 to 197 (TVYFQEEFLD…GQSIESGSIE (178 aa)) is N-domain. Asn-42 is a glycosylation site (N-linked (GlcNAc...) asparagine). An intrachain disulfide couples Cys-105 to Cys-137. An alpha-D-glucoside contacts are provided by Tyr-109, Lys-111, Tyr-128, and Asp-135. Tandem repeats lie at residues 191 to 202 (IESGSIEYDWQL), 209 to 220 (EKASAEAEGWDQ), 222 to 231 (AKDKSQDWEK), 235 to 246 (DASASKPSDWKG), 250 to 260 (GDWQAAMLQKP), 264 to 272 (DGLKPEGID), and 274 to 284 (DVWLHQKMKNS). The 4 X approximate repeats stretch occupies residues 191 to 246 (IESGSIEYDWQLTSLKKMEKASAEAEGWDQAAKDKSQDWEKHFLDASASKPSDWKG). The interval 198 to 294 (YDWQLTSLKK…YLTEYDLSEF (97 aa)) is P-domain. Residues 250 to 284 (GDWQAAMLQKPPYQDGLKPEGIDKDVWLHQKMKNS) are 3 X approximate repeats. A C-domain region spans residues 295–384 (ENIGAVGLEL…FKGFHRRNEF (90 aa)). Glu-303 contacts an alpha-D-glucoside. Positions 381 to 384 (RNEF) match the Prevents secretion from ER motif.

This sequence belongs to the calreticulin family. Component of an EIF2 complex at least composed of CELF1/CUGBP1, CALR, CALR3, EIF2S1, EIF2S2, HSP90B1 and HSPA5.

It is found in the endoplasmic reticulum lumen. Its function is as follows. During spermatogenesis, may act as a lectin-independent chaperone for specific client proteins such as ADAM3. CALR3 capacity for calcium-binding may be absent or much lower than that of CALR. Required for sperm fertility. This is Calreticulin-3 (CALR3) from Bos taurus (Bovine).